The following is a 273-amino-acid chain: N(omega)-hydroxy-L-arginine amidinohydrolase (273 aa).

Aspartate 109, histidine 111, aspartate 113, aspartate 198, and aspartate 200 together coordinate Mn(2+).

It belongs to the arginase family. The cofactor is Mn(2+).

It carries out the reaction N(omega)-hydroxy-L-arginine + H2O = hydroxyurea + L-ornithine. Involved in the biosynthesis of the antibiotic D-cycloserine (DCS), a cyclic structural analog of D-alanine, used as an antitubercular agent. Catalyzes the hydrolysis of N(omega)-hydroxy-L-arginine (NHA) to yield hydroxyurea (HU) and L-ornithine. This Streptomyces lavendulae protein is N(omega)-hydroxy-L-arginine amidinohydrolase.